The primary structure comprises 179 residues: Probable DNA-directed RNA polymerase subunit delta (179 aa).

The 68-residue stretch at 14-81 (MSLVELAYEI…GDQRWGLRSW (68 aa)) folds into the HTH HARE-type domain. Positions 108 to 179 (VVEEDFDEIE…DDLDDNEEEK (72 aa)) are disordered. Residues 109–179 (VEEDFDEIEE…DDLDDNEEEK (71 aa)) are compositionally biased toward acidic residues.

The protein belongs to the RpoE family. In terms of assembly, RNAP is composed of a core of 2 alpha, a beta and a beta' subunits. The core is associated with a delta subunit and one of several sigma factors.

Functionally, participates in both the initiation and recycling phases of transcription. In the presence of the delta subunit, RNAP displays an increased specificity of transcription, a decreased affinity for nucleic acids, and an increased efficiency of RNA synthesis because of enhanced recycling. The protein is Probable DNA-directed RNA polymerase subunit delta of Bacillus pumilus (strain SAFR-032).